The primary structure comprises 362 residues: MSKRLRVEDDFNPVYPYGYARNQNIPFLTPPFVSSDGFQNFPPGVLSLKLADPIAIVNGNVSLKVGGGLTLQDGTGKLTVNADPPLQLTNNKLGIALDAPFDVIDNKLTLLAGHGLSIITKETSTLPGLRNTLVVLTGKGIGTESTDNGGTVCVRVGEGGGLSFNNDGDLVAFNKKEDKRTLWTTPDTSPNCKIDQDKDSKLTLVLTKCGSQILANVSLIVVDGKYKIINNNTQPALKGFTIKLLFDENGVLMESSNLGKSYWNFRNENSIMSTAYEKAIGFMPNLVAYPKPTAGSKKYARDIVYGNIYLGGKPDQPVTIKTTFNQETGCEYSITFDFSWAKTYVNVEFETTSFTFSYIAQE.

The protein belongs to the adenoviridae fiber family. As to quaternary structure, homotrimer. Interacts with host receptor CXCAR. Interacts (via N-terminal tail region) with pentons.

It localises to the virion. Its subcellular location is the host nucleus. Forms spikes that protrude from each vertex of the icosahedral capsid. Interacts with host receptor CXCAR to provide virion initial attachment to target cell. Fiber proteins are shed during virus entry, when virus is still at the cell surface. This is Fiber protein from Homo sapiens (Human).